A 250-amino-acid chain; its full sequence is MSNIQTGYLNAQDAAALDVELMSTPGFSLEQLMELAGLSVAEAVYEVAFGGDGEKASNDGGRKKRVLLVCGPGNNGGDGLVAARHLAHFGLESTIVYPKQSSKQHFVNLVKQCEDMGIPILQEIPSTNDSSKVEETKYDVIVDAIFGFSFHGTAPREPYATAISQMVQLQKEQSVLLSVDVPSGWDVDGGDLTGTNFHPDVLISLTAPKLSAKKFEGRHFVGGRFLPPSIAEKYGIQKPPYPGVSQVMEL.

One can recognise a YjeF N-terminal domain in the interval alanine 14–lysine 238. Position 74–78 (asparagine 74–aspartate 78) interacts with (6S)-NADPHX. Asparagine 75 and aspartate 143 together coordinate K(+). (6S)-NADPHX contacts are provided by residues glycine 147–alanine 154, tyrosine 159, and aspartate 180. Residue serine 183 coordinates K(+).

This sequence belongs to the NnrE/AIBP family. K(+) serves as cofactor.

The catalysed reaction is (6R)-NADHX = (6S)-NADHX. The enzyme catalyses (6R)-NADPHX = (6S)-NADPHX. Its function is as follows. Catalyzes the epimerization of the S- and R-forms of NAD(P)HX, a damaged form of NAD(P)H that is a result of enzymatic or heat-dependent hydration. This is a prerequisite for the S-specific NAD(P)H-hydrate dehydratase to allow the repair of both epimers of NAD(P)HX. This Thalassiosira pseudonana (Marine diatom) protein is NAD(P)H-hydrate epimerase.